A 329-amino-acid polypeptide reads, in one-letter code: tRNA(Ile)-lysidine synthase (329 aa).

Position 37–42 (37–42 (SGGSDS)) interacts with ATP.

It belongs to the tRNA(Ile)-lysidine synthase family.

The protein localises to the cytoplasm. The catalysed reaction is cytidine(34) in tRNA(Ile2) + L-lysine + ATP = lysidine(34) in tRNA(Ile2) + AMP + diphosphate + H(+). In terms of biological role, ligates lysine onto the cytidine present at position 34 of the AUA codon-specific tRNA(Ile) that contains the anticodon CAU, in an ATP-dependent manner. Cytidine is converted to lysidine, thus changing the amino acid specificity of the tRNA from methionine to isoleucine. In Zymomonas mobilis subsp. mobilis (strain ATCC 31821 / ZM4 / CP4), this protein is tRNA(Ile)-lysidine synthase.